The following is a 552-amino-acid chain: CCR4-NOT transcription complex subunit 6 (552 aa).

LRR repeat units lie at residues 52-73 (HLTA…IAKL), 75-96 (NLVY…LGNM), 98-120 (SLRE…GKLF), and 121-143 (QLQT…CLEP). A nuclease domain region spans residues 153–552 (LLDNLSVSTE…VNGIHLPGRR (400 aa)). E235 is a binding site for Mg(2+). Substrate is bound by residues E235, E271, H356, and P361. D407 serves as a coordination point for Mg(2+). Catalysis depends on D407, which acts as the Proton donor/acceptor. N409, N476, and F481 together coordinate substrate.

The protein belongs to the CCR4/nocturin family. Subunit of the CCR4-NOT core complex. It depends on Mg(2+) as a cofactor.

The protein resides in the cytoplasm. It localises to the nucleus. It carries out the reaction Exonucleolytic cleavage of poly(A) to 5'-AMP.. Functionally, poly(A) nuclease involved in mRNA decay. Has 3'-5' RNase activity. The CCR4-NOT complex functions as a general transcription regulation complex. Enhances ligand-dependent transcriptional activity of nuclear hormone receptors. In Xenopus laevis (African clawed frog), this protein is CCR4-NOT transcription complex subunit 6 (cnot6).